A 393-amino-acid polypeptide reads, in one-letter code: DNA-directed RNA polymerase subunit Rpo1C (393 aa).

It belongs to the RNA polymerase beta' chain family. Part of the RNA polymerase complex.

The protein resides in the cytoplasm. The enzyme catalyses RNA(n) + a ribonucleoside 5'-triphosphate = RNA(n+1) + diphosphate. DNA-dependent RNA polymerase (RNAP) catalyzes the transcription of DNA into RNA using the four ribonucleoside triphosphates as substrates. Forms part of the jaw domain. The polypeptide is DNA-directed RNA polymerase subunit Rpo1C (Thermococcus celer).